Reading from the N-terminus, the 336-residue chain is Ferrochelatase (336 aa).

The Fe cation site is built by histidine 206 and glutamate 287.

This sequence belongs to the ferrochelatase family.

Its subcellular location is the cytoplasm. It catalyses the reaction heme b + 2 H(+) = protoporphyrin IX + Fe(2+). Its pathway is porphyrin-containing compound metabolism; protoheme biosynthesis; protoheme from protoporphyrin-IX: step 1/1. In terms of biological role, catalyzes the ferrous insertion into protoporphyrin IX. This chain is Ferrochelatase, found in Neisseria meningitidis serogroup C / serotype 2a (strain ATCC 700532 / DSM 15464 / FAM18).